The sequence spans 841 residues: Translation initiation factor IF-2 (841 aa).

5 stretches are compositionally biased toward basic and acidic residues: residues 1–12 (MSDNEIKNEAPK), 52–92 (ALKA…EATK), 114–170 (EQPK…REEA), 188–202 (READ…EANR), and 213–235 (KKGD…DVKG). Disordered regions lie at residues 1 to 24 (MSDN…KTTV) and 52 to 246 (ALKA…GSAL). The tr-type G domain occupies 340 to 510 (TRAPVVTIMG…LLQSEVLELT (171 aa)). Residues 349–356 (GHVDHGKT) form a G1 region. 349 to 356 (GHVDHGKT) contributes to the GTP binding site. Positions 374-378 (GITQH) are G2. The tract at residues 396 to 399 (DTPG) is G3. GTP-binding positions include 396–400 (DTPGH) and 450–453 (NKID). Residues 450–453 (NKID) form a G4 region. Positions 486-488 (SAK) are G5.

Belongs to the TRAFAC class translation factor GTPase superfamily. Classic translation factor GTPase family. IF-2 subfamily.

Its subcellular location is the cytoplasm. One of the essential components for the initiation of protein synthesis. Protects formylmethionyl-tRNA from spontaneous hydrolysis and promotes its binding to the 30S ribosomal subunits. Also involved in the hydrolysis of GTP during the formation of the 70S ribosomal complex. The polypeptide is Translation initiation factor IF-2 (Actinobacillus pleuropneumoniae serotype 5b (strain L20)).